The chain runs to 530 residues: Serendipity locus protein alpha (530 aa).

As to expression, transient expression in blastoderm from nuclear cycle 11 to the onset of gastrulation.

The protein resides in the cytoplasm. Its subcellular location is the cell membrane. Required for the cellularization of the syncytial blastoderm embryo. Involved in the localization of the actin filaments just prior to and during plasma membrane invagination. Sry-alpha together with nullo and bnk may provide auxiliary functions, by acting both to stabilize a large and dynamic microfilament structure and regulate its functions. The polypeptide is Serendipity locus protein alpha (Sry-alpha) (Drosophila melanogaster (Fruit fly)).